A 372-amino-acid polypeptide reads, in one-letter code: Glutamate 5-kinase (372 aa).

Lysine 14 is a binding site for ATP. Substrate is bound by residues serine 54, aspartate 141, and asparagine 153. An ATP-binding site is contributed by 173–174; the sequence is TD. The 79-residue stretch at 280-358 folds into the PUA domain; it reads RGNVTLDEGA…DEIESLLGYI (79 aa).

This sequence belongs to the glutamate 5-kinase family.

Its subcellular location is the cytoplasm. It carries out the reaction L-glutamate + ATP = L-glutamyl 5-phosphate + ADP. Its pathway is amino-acid biosynthesis; L-proline biosynthesis; L-glutamate 5-semialdehyde from L-glutamate: step 1/2. In terms of biological role, catalyzes the transfer of a phosphate group to glutamate to form L-glutamate 5-phosphate. In Nitrosospira multiformis (strain ATCC 25196 / NCIMB 11849 / C 71), this protein is Glutamate 5-kinase.